Consider the following 181-residue polypeptide: 6,7-dimethyl-8-ribityllumazine synthase (181 aa).

5-amino-6-(D-ribitylamino)uracil contacts are provided by residues Tyr27, 58–60 (ALE), and 87–89 (CVI). 92 to 93 (ET) contributes to the (2S)-2-hydroxy-3-oxobutyl phosphate binding site. His95 functions as the Proton donor in the catalytic mechanism. Residue Asn120 coordinates 5-amino-6-(D-ribitylamino)uracil. Position 134 (Arg134) interacts with (2S)-2-hydroxy-3-oxobutyl phosphate.

It belongs to the DMRL synthase family.

The catalysed reaction is (2S)-2-hydroxy-3-oxobutyl phosphate + 5-amino-6-(D-ribitylamino)uracil = 6,7-dimethyl-8-(1-D-ribityl)lumazine + phosphate + 2 H2O + H(+). It functions in the pathway cofactor biosynthesis; riboflavin biosynthesis; riboflavin from 2-hydroxy-3-oxobutyl phosphate and 5-amino-6-(D-ribitylamino)uracil: step 1/2. In terms of biological role, catalyzes the formation of 6,7-dimethyl-8-ribityllumazine by condensation of 5-amino-6-(D-ribitylamino)uracil with 3,4-dihydroxy-2-butanone 4-phosphate. This is the penultimate step in the biosynthesis of riboflavin. The polypeptide is 6,7-dimethyl-8-ribityllumazine synthase (Methylobacterium sp. (strain 4-46)).